The chain runs to 664 residues: L-glutamate oxidase precursor (664 aa).

The tat-type signal signal peptide spans 1 to 44; the sequence is MTEDHAVVRSDGGLSRRSFAAVAGTATVATALTSGVAAALPAPA. Positions 105, 124, 125, 133, 161, 162, 638, 646, and 647 each coordinate FAD.

Belongs to the flavin monoamine oxidase family. LGOX subfamily. As to quaternary structure, the mature enzyme is a heterohexamer composed of 2 alpha chains, 2 beta chains and 2 gamma chains (alpha2beta2gamma2). FAD serves as cofactor. Post-translationally, predicted to be exported by the Tat system. The position of the signal peptide cleavage has not been experimentally proven. The precursor form is proteolytically cleaved by an endopeptidase into alpha, beta and gamma chains, which form the stable mature enzyme.

It is found in the secreted. The catalysed reaction is L-glutamate + O2 + H2O = H2O2 + 2-oxoglutarate + NH4(+). Its activity is regulated as follows. Activity is stimulated in the presence of Mn(2+), Ca(2+) or Mg(2+). Functionally, catalyzes the oxidative deamination of L-glutamate to 2-ketoglutarate along with the production of ammonia and hydrogen peroxide. This is L-glutamate oxidase precursor from Streptomyces viridosporus (strain ATCC 14672 / DSM 40746 / JCM 4963 / KCTC 9882 / NRRL B-12104 / FH 1290) (Streptomyces ghanaensis).